The primary structure comprises 385 residues: 4-hydroxy-3-methylbut-2-en-1-yl diphosphate synthase (flavodoxin) 2 (385 aa).

Positions 281, 284, 316, and 323 each coordinate [4Fe-4S] cluster.

The protein belongs to the IspG family. The cofactor is [4Fe-4S] cluster.

It carries out the reaction (2E)-4-hydroxy-3-methylbut-2-enyl diphosphate + oxidized [flavodoxin] + H2O + 2 H(+) = 2-C-methyl-D-erythritol 2,4-cyclic diphosphate + reduced [flavodoxin]. The protein operates within isoprenoid biosynthesis; isopentenyl diphosphate biosynthesis via DXP pathway; isopentenyl diphosphate from 1-deoxy-D-xylulose 5-phosphate: step 5/6. In terms of biological role, converts 2C-methyl-D-erythritol 2,4-cyclodiphosphate (ME-2,4cPP) into 1-hydroxy-2-methyl-2-(E)-butenyl 4-diphosphate. The protein is 4-hydroxy-3-methylbut-2-en-1-yl diphosphate synthase (flavodoxin) 2 of Streptomyces avermitilis (strain ATCC 31267 / DSM 46492 / JCM 5070 / NBRC 14893 / NCIMB 12804 / NRRL 8165 / MA-4680).